The sequence spans 340 residues: Glycerol-3-phosphate dehydrogenase [NAD(P)+] (340 aa).

NADPH contacts are provided by Ser-12, Trp-13, Lys-34, and Lys-107. Residues Lys-107, Gly-138, and Ser-140 each contribute to the sn-glycerol 3-phosphate site. NADPH is bound at residue Ala-142. Lys-193, Asp-246, Ser-256, Arg-257, and Asn-258 together coordinate sn-glycerol 3-phosphate. The active-site Proton acceptor is the Lys-193. Arg-257 serves as a coordination point for NADPH. NADPH is bound by residues Ile-281 and Glu-283.

The protein belongs to the NAD-dependent glycerol-3-phosphate dehydrogenase family.

The protein localises to the cytoplasm. The enzyme catalyses sn-glycerol 3-phosphate + NAD(+) = dihydroxyacetone phosphate + NADH + H(+). It catalyses the reaction sn-glycerol 3-phosphate + NADP(+) = dihydroxyacetone phosphate + NADPH + H(+). It participates in membrane lipid metabolism; glycerophospholipid metabolism. Functionally, catalyzes the reduction of the glycolytic intermediate dihydroxyacetone phosphate (DHAP) to sn-glycerol 3-phosphate (G3P), the key precursor for phospholipid synthesis. This chain is Glycerol-3-phosphate dehydrogenase [NAD(P)+], found in Enterococcus faecalis (strain ATCC 700802 / V583).